The following is a 98-amino-acid chain: Ribonuclease kappa (98 aa).

2 helical membrane passes run 13-33 (ACGI…GIFF) and 65-85 (VSYN…FSFC).

Belongs to the RNase K family. As to quaternary structure, interacts with the proton translocation complex V0 of the V-ATPase. Interacts with ATP6AP1.

It is found in the endomembrane system. Its subcellular location is the cytoplasmic vesicle. The protein localises to the clathrin-coated vesicle membrane. Its function is as follows. Endoribonuclease which preferentially cleaves ApU and ApG phosphodiester bonds. Hydrolyzes UpU bonds at a lower rate. Regulates the activity of vacuolar (H+)-ATPase (V-ATPase) which is responsible for acidifying and maintaining the pH of intracellular compartments. Required at an early stage of receptor-mediated endocytosis. The polypeptide is Ribonuclease kappa (Rnasek) (Mus musculus (Mouse)).